Consider the following 261-residue polypeptide: Ribonuclease HII (261 aa).

The RNase H type-2 domain maps to 71 to 259 (KYIAGVDEVG…VKEAKLHFDS (189 aa)). Asp77, Glu78, and Asp169 together coordinate a divalent metal cation.

It belongs to the RNase HII family. It depends on Mn(2+) as a cofactor. Requires Mg(2+) as cofactor.

The protein localises to the cytoplasm. It catalyses the reaction Endonucleolytic cleavage to 5'-phosphomonoester.. In terms of biological role, endonuclease that specifically degrades the RNA of RNA-DNA hybrids. This Listeria monocytogenes serotype 4a (strain HCC23) protein is Ribonuclease HII.